The chain runs to 346 residues: MDVLELIHTTVLGLNKDIDLSETKIYGFLIENSLTEIIEVSKRKNPGSLLNIITGCYEMIWKNHMDVIYNFITGDSSQIEDQAICLLAVKKNDIDIVKIFAEKGFDFNIELKKGSNMFYTYSIINSILEFNSVDLLKYLVENRLINDSKLSKNKYFYVYESTHLLDLLLDNYFFDTKNDQSEVIRSYLQNNICLNINTDILLKLIRLPHDINKIVLEDTHGYIFYSVANKKNSKQEIKSKLDLVISMGFNKIKELLDLLCMSQDEFCILISCILDMGYQLSTENKYNLLVKIRPNIIDLFYEHNIDLSNCHFTVPEIINKYLNKLNSLGLDNHTTCKLLMDKYFRF.

This is an uncharacterized protein from Acanthamoeba polyphaga (Amoeba).